The following is a 119-amino-acid chain: Protein Wnt-4 (119 aa).

Serine 1 carries the O-palmitoleoyl serine; by PORCN lipid modification. 2 cysteine pairs are disulfide-bonded: cysteine 69-cysteine 100 and cysteine 85-cysteine 95. N-linked (GlcNAc...) asparagine glycosylation occurs at asparagine 86.

Belongs to the Wnt family. Palmitoleoylation is required for efficient binding to frizzled receptors. Depalmitoleoylation leads to Wnt signaling pathway inhibition.

Its subcellular location is the secreted. The protein localises to the extracellular space. It localises to the extracellular matrix. Functionally, ligand for members of the frizzled family of seven transmembrane receptors. Plays an important role in embryonic development. The chain is Protein Wnt-4 (WNT-4) from Sceloporus occidentalis (Western fence lizard).